Here is a 165-residue protein sequence, read N- to C-terminus: Large ribosomal subunit protein uL10 (165 aa).

This sequence belongs to the universal ribosomal protein uL10 family. In terms of assembly, part of the ribosomal stalk of the 50S ribosomal subunit. The N-terminus interacts with L11 and the large rRNA to form the base of the stalk. The C-terminus forms an elongated spine to which L12 dimers bind in a sequential fashion forming a multimeric L10(L12)X complex.

Its function is as follows. Forms part of the ribosomal stalk, playing a central role in the interaction of the ribosome with GTP-bound translation factors. In Mycoplasma capricolum subsp. capricolum (strain California kid / ATCC 27343 / NCTC 10154), this protein is Large ribosomal subunit protein uL10.